The sequence spans 225 residues: Uracil-DNA glycosylase (225 aa).

The active-site Proton acceptor is the Asp-65.

Belongs to the uracil-DNA glycosylase (UDG) superfamily. UNG family.

The protein localises to the cytoplasm. It carries out the reaction Hydrolyzes single-stranded DNA or mismatched double-stranded DNA and polynucleotides, releasing free uracil.. Its function is as follows. Excises uracil residues from the DNA which can arise as a result of misincorporation of dUMP residues by DNA polymerase or due to deamination of cytosine. The polypeptide is Uracil-DNA glycosylase (Bacillus cereus (strain ATCC 10987 / NRS 248)).